The chain runs to 345 residues: Holliday junction branch migration complex subunit RuvB (345 aa).

Residues 1-186 (MSTDPDEREV…FGFTAHMDFY (186 aa)) form a large ATPase domain (RuvB-L) region. ATP-binding positions include Leu25, Arg26, Gly67, Lys70, Thr71, Ser72, 133–135 (EDF), Arg176, Tyr186, and Arg223. Thr71 provides a ligand contact to Mg(2+). Positions 187-257 (EPAELERVLV…VAKAALAVYD (71 aa)) are small ATPAse domain (RuvB-S). A head domain (RuvB-H) region spans residues 260–345 (ELGLDRLDRA…AGANQPGLFE (86 aa)). DNA-binding residues include Arg315 and Arg320.

The protein belongs to the RuvB family. In terms of assembly, homohexamer. Forms an RuvA(8)-RuvB(12)-Holliday junction (HJ) complex. HJ DNA is sandwiched between 2 RuvA tetramers; dsDNA enters through RuvA and exits via RuvB. An RuvB hexamer assembles on each DNA strand where it exits the tetramer. Each RuvB hexamer is contacted by two RuvA subunits (via domain III) on 2 adjacent RuvB subunits; this complex drives branch migration. In the full resolvosome a probable DNA-RuvA(4)-RuvB(12)-RuvC(2) complex forms which resolves the HJ.

Its subcellular location is the cytoplasm. The enzyme catalyses ATP + H2O = ADP + phosphate + H(+). Functionally, the RuvA-RuvB-RuvC complex processes Holliday junction (HJ) DNA during genetic recombination and DNA repair, while the RuvA-RuvB complex plays an important role in the rescue of blocked DNA replication forks via replication fork reversal (RFR). RuvA specifically binds to HJ cruciform DNA, conferring on it an open structure. The RuvB hexamer acts as an ATP-dependent pump, pulling dsDNA into and through the RuvAB complex. RuvB forms 2 homohexamers on either side of HJ DNA bound by 1 or 2 RuvA tetramers; 4 subunits per hexamer contact DNA at a time. Coordinated motions by a converter formed by DNA-disengaged RuvB subunits stimulates ATP hydrolysis and nucleotide exchange. Immobilization of the converter enables RuvB to convert the ATP-contained energy into a lever motion, pulling 2 nucleotides of DNA out of the RuvA tetramer per ATP hydrolyzed, thus driving DNA branch migration. The RuvB motors rotate together with the DNA substrate, which together with the progressing nucleotide cycle form the mechanistic basis for DNA recombination by continuous HJ branch migration. Branch migration allows RuvC to scan DNA until it finds its consensus sequence, where it cleaves and resolves cruciform DNA. The chain is Holliday junction branch migration complex subunit RuvB from Mycobacterium marinum (strain ATCC BAA-535 / M).